The following is a 316-amino-acid chain: UDP-N-acetyl-2-amino-2-deoxy-D-glucuronate oxidase (316 aa).

NAD(+) is bound by residues 11–13 (GYI), 32–37 (YDINDS), Glu-55, 81–84 (NYLH), 101–102 (EK), Gln-130, and 171–172 (WK).

It belongs to the Gfo/Idh/MocA family. In terms of assembly, homotetramer.

The enzyme catalyses UDP-2-acetamido-2-deoxy-alpha-D-glucuronate + NAD(+) = UDP-2-acetamido-2-deoxy-alpha-D-ribo-hex-3-uluronate + NADH + H(+). It carries out the reaction 2-hydroxyglutarate + NAD(+) = 2-oxoglutarate + NADH + H(+). It participates in bacterial outer membrane biogenesis; LPS O-antigen biosynthesis. Functionally, plays a role in the biosynthesis of B-band O antigen for serotype O5. Catalyzes the NAD-dependent oxidation of UDP-N-acetylglucosaminuronic acid (UDP-D-GlcNAcA) to UDP-2-acetamido-2-deoxy-3-oxo-D-glucuronic acid (UDP-3-oxo-D-GlcNAcA). Cannot use UDP-GlcNAc or UDP-GalNAc as the nucleotide sugar substrate, and can use only poorly UDP-D-glucuronic acid (UDP-GlcA). Undergoes an NAD(+) recycling mechanism using 2-oxoglutarate as an oxidant. This Pseudomonas aeruginosa (strain ATCC 15692 / DSM 22644 / CIP 104116 / JCM 14847 / LMG 12228 / 1C / PRS 101 / PAO1) protein is UDP-N-acetyl-2-amino-2-deoxy-D-glucuronate oxidase.